Consider the following 408-residue polypeptide: Hepatocyte nuclear factor 4-gamma (408 aa).

The segment at residues 9 to 84 (NCLCAICGDR…AGMKKEAVQN (76 aa)) is a DNA-binding region (nuclear receptor). 2 consecutive NR C4-type zinc fingers follow at residues 12–32 (CAIC…CDGC) and 48–72 (CRFS…LRKC). Serine 94 carries the post-translational modification Phosphoserine. One can recognise an NR LBD domain in the interval 99–328 (SNIPSINTLA…NLLQEMLLGG (230 aa)). The interval 369–408 (ATPETPLPSPPQGSGQEPYKITANQASVISHQSLSKQKQL) is disordered. Residues threonine 370 and threonine 373 each carry the phosphothreonine modification. Serine 377 carries the phosphoserine modification. Residues 390–408 (TANQASVISHQSLSKQKQL) show a composition bias toward polar residues.

Belongs to the nuclear hormone receptor family. NR2 subfamily.

The protein resides in the nucleus. In terms of biological role, transcription factor. Has a lower transcription activation potential than HNF4-alpha. The protein is Hepatocyte nuclear factor 4-gamma (Hnf4g) of Mus musculus (Mouse).